The chain runs to 542 residues: Chloride channel CLIC-like protein 1 (542 aa).

The N-terminal stretch at M1–A18 is a signal peptide. Topologically, residues H19–N184 are lumenal. A helical membrane pass occupies residues V185–T205. Topologically, residues Y206–V216 are cytoplasmic. Residues F217–F237 traverse the membrane as a helical segment. Residues A238–E329 lie on the Lumenal side of the membrane. A helical membrane pass occupies residues I330–C350. The Cytoplasmic portion of the chain corresponds to Y351–G542. Residues E369–G394 form a disordered region. The segment covering G377–P389 has biased composition (basic and acidic residues). Phosphoserine occurs at positions 438 and 464. Positions A452–G542 are disordered. Positions E480–S491 are enriched in low complexity. T482 carries the post-translational modification Phosphothreonine. Phosphoserine is present on S532.

The protein belongs to the chloride channel MCLC family. In terms of assembly, homomultimers. Interacts with mitochondrial protein PIGBOS1 (via C-terminus); the interaction occurs at the mitochondria-associated endoplasmic reticulum (ER) membrane, a zone of contact between the ER and mitochondrial membranes, but does not appear to play a role in ER-mitochondria tethering and is not affected by ER stress. Interacts with CALR.

The protein resides in the endoplasmic reticulum membrane. The catalysed reaction is chloride(in) = chloride(out). It carries out the reaction bromide(in) = bromide(out). It catalyses the reaction nitrate(in) = nitrate(out). The enzyme catalyses fluoride(in) = fluoride(out). Its function is as follows. Anion-selective channel with Ca(2+)-dependent and voltage-independent gating. Permeable to small monovalent anions with selectivity for bromide &gt; chloride &gt; nitrate &gt; fluoride. Operates in the endoplasmic reticulum (ER) membrane where it mediates chloride efflux to compensate for the loss of positive charges from the ER lumen upon Ca(2+) release. Contributes to the maintenance of ER Ca(2+) pools and activation of unfolded protein response to prevent accumulation of misfolded proteins in the ER lumen. Particularly involved in ER homeostasis mechanisms underlying motor neurons and retinal photoreceptors survival. The chain is Chloride channel CLIC-like protein 1 (CLCC1) from Bos taurus (Bovine).